Here is a 122-residue protein sequence, read N- to C-terminus: Flagellar protein FliT (122 aa).

Positions 1-50 (MTSTVEFINRWQRIALLSQSLLELAQRGEWELLLQQEVSYLQSIETVMEK) are required for homodimerization. The segment at 60-98 (IQDMVAGYIKQTLDNEQRLKGLLQQRLDELSGLIGQSTR) is fliD binding.

This sequence belongs to the FliT family. As to quaternary structure, homodimer. Interacts with FliD and FlhC.

The protein localises to the cytoplasm. It localises to the cytosol. In terms of biological role, dual-function protein that regulates the transcription of class 2 flagellar operons and that also acts as an export chaperone for the filament-capping protein FliD. As a transcriptional regulator, acts as an anti-FlhDC factor; it directly binds FlhC, thus inhibiting the binding of the FlhC/FlhD complex to class 2 promoters, resulting in decreased expression of class 2 flagellar operons. As a chaperone, effects FliD transition to the membrane by preventing its premature polymerization, and by directing it to the export apparatus. The protein is Flagellar protein FliT of Salmonella arizonae (strain ATCC BAA-731 / CDC346-86 / RSK2980).